The chain runs to 519 residues: Protein BANP (519 aa).

Phosphoserine is present on residues Ser-19, Ser-90, and Ser-100. The stretch at 53-90 (IKTICLRLDSIEAKLQALEATCKSLEEKLDLVTNKQHS) forms a coiled coil. Lys-133 participates in a covalent cross-link: Glycyl lysine isopeptide (Lys-Gly) (interchain with G-Cter in SUMO2). Residues 152–342 (NAVPGRRQNT…FSRRTPNSSS (191 aa)) are interaction with CUX1 and HDAC1. The segment covering 168 to 177 (GQEDSHHEDG) has biased composition (basic and acidic residues). The tract at residues 168–196 (GQEDSHHEDGESGSEASDSVSSCGQAGSQ) is disordered. Positions 180–189 (GSEASDSVSS) are enriched in low complexity. Residues 226-322 (EMRVRCAIIP…SKCRTAWRRK (97 aa)) form the BEN domain. N6-acetyllysine is present on Lys-275. A disordered region spans residues 327–364 (SLAVKSFSRRTPNSSSYCPSEPMMSTPPPASELPQPQP). A compositionally biased stretch (polar residues) spans 335–344 (RRTPNSSSYC). 2 positions are modified to phosphothreonine: Thr-337 and Thr-352. The segment at 342-393 (SYCPSEPMMSTPPPASELPQPQPQPQALHYALANAQQVQIHQIGEDGQVQVG) is DNA-binding. Pro residues predominate over residues 351-364 (STPPPASELPQPQP).

The protein belongs to the BANP/SMAR1 family. As to quaternary structure, part of a corepressor complex containing BANP, HDAC1, SIN3A, SIN3B, RBL1 and RBL2. Forms a trimeric complex in the nucleus consisting of BANP, HDAC6 and KHDRBS1/SAM68; HDAC6 keeps KHDRBS1 in a deacetylated state which inhibits the inclusion of CD44 alternate exons. The complex is disrupted by MAPK1/MAPK3-mediated phosphorylation of BANP which results in BANP export to the cytoplasm. This facilitates acetylation of KHDRBS1 and CD44 variant exon inclusion. Interacts with TP53. Interacts with CUX1/CDP. Interacts with HDAC1. MAPK1/MAPK3-mediated phosphorylation at Thr-337 and Thr-352 results in export to the cytoplasm. Down-regulated in breast cancer cell lines.

The protein resides in the nucleus. It is found in the nucleus speckle. It localises to the cytoplasm. Controls V(D)J recombination during T-cell development by repressing T-cell receptor (TCR) beta enhancer function. Binds to scaffold/matrix attachment region beta (S/MARbeta), an ATC-rich DNA sequence located upstream of the TCR beta enhancer. Represses cyclin D1 transcription by recruiting HDAC1 to its promoter, thereby diminishing H3K9ac, H3S10ph and H4K8ac levels. Promotes TP53 activation, which causes cell cycle arrest. Plays a role in the regulation of alternative splicing. Binds to CD44 pre-mRNA and negatively regulates the inclusion of CD44 proximal variable exons v2-v6 but has no effect on distal variable exons v7-v10. The chain is Protein BANP (BANP) from Homo sapiens (Human).